The primary structure comprises 75 residues: Cruzioseptin-8 (75 aa).

The signal sequence occupies residues 1–22 (MAFLKKCLFLVLFLGLVSLSIC). The propeptide occupies 23-43 (EEEKREEENEEVQEDDDQSEE). A disordered region spans residues 25–44 (EKREEENEEVQEDDDQSEEK). Over residues 30–41 (ENEEVQEDDDQS) the composition is skewed to acidic residues. Gln72 is modified (glutamine amide). The propeptide occupies 74 to 75 (EQ).

Expressed by the skin glands.

Its subcellular location is the secreted. In terms of biological role, has antimicrobial activity. The protein is Cruzioseptin-8 of Cruziohyla calcarifer (Splendid leaf frog).